The following is a 151-amino-acid chain: Transcriptional repressor NrdR (151 aa).

Residues 3–34 (CPFCSSDNTRVIDSRPADDNSSIRRRRLCDDC) fold into a zinc finger. Residues 49-139 (LIVIKKDNNR…VYREFKDVNT (91 aa)) enclose the ATP-cone domain.

Belongs to the NrdR family. The cofactor is Zn(2+).

Its function is as follows. Negatively regulates transcription of bacterial ribonucleotide reductase nrd genes and operons by binding to NrdR-boxes. This chain is Transcriptional repressor NrdR, found in Agathobacter rectalis (strain ATCC 33656 / DSM 3377 / JCM 17463 / KCTC 5835 / VPI 0990) (Eubacterium rectale).